We begin with the raw amino-acid sequence, 419 residues long: MVAAAATSAFFPVPAPGTSPKPGKSGNWPSSLSPTFKPKSIPNGGFQVKANASAHPKANGSAVNLKSGSLNTQEDTSSSPPPRAFLNQLPDWSMLLTAITTVFVAAEKQWTMLDRKSKRPDMLVDSVGLKSIVRDGLVSRHSFSIRSYEIGADRTASIETLMNHLQETTINHCKSLGLHNDGFGRTPGMCKNDLIWVLTKMQIMVNRYPTWGDTVEINTWFSQSGKIGMASDWLISDCNTGEILIRATSVWAMMNQKTRRFSRLPYEVRQELTPHFVDSPHVIEDNDQKLRKFDVKTGDSIRKGLTPRWNDLDVNQHVSNVKYIGWILESMPIEVLETQELCSLTVEYRRECGMDSVLESVTAVDPSENGGRSQYKHLLRLEDGTDIVKSRTEWRPKNAGTNGAISTSTAKTSNGNSVS.

The N-terminal 50 residues, 1-50 (MVAAAATSAFFPVPAPGTSPKPGKSGNWPSSLSPTFKPKSIPNGGFQVKA), are a transit peptide targeting the chloroplast. The interval 1–84 (MVAAAATSAF…DTSSSPPPRA (84 aa)) is disordered. A compositionally biased stretch (polar residues) spans 61–78 (SAVNLKSGSLNTQEDTSS). Residues Asn315, His317, and Cys352 contribute to the active site. The disordered stretch occupies residues 390–419 (SRTEWRPKNAGTNGAISTSTAKTSNGNSVS). A compositionally biased stretch (polar residues) spans 399-419 (AGTNGAISTSTAKTSNGNSVS).

Belongs to the acyl-ACP thioesterase family.

The protein resides in the plastid. It localises to the chloroplast. It catalyses the reaction octanoyl-[ACP] + H2O = octanoate + holo-[ACP] + H(+). It carries out the reaction decanoyl-[ACP] + H2O = decanoate + holo-[ACP] + H(+). Functionally, plays an essential role in chain termination during de novo fatty acid synthesis. Possesses thioesterase activity for short chain acyl-ACPs. Substrate preference is 8:0 &gt; 10:0. This chain is Acyl-[acyl-carrier-protein] hydrolase FATB1, chloroplastic, found in Cuphea viscosissima (Blue waxweed).